Consider the following 217-residue polypeptide: Claudin-9 (217 aa).

Residues 1–7 (MASTGLE) lie on the Cytoplasmic side of the membrane. Residues 8-28 (LLGMTLAVLGWLGTLVSCALP) traverse the membrane as a helical segment. At 29–81 (LWKVTAFIGNSIVVAQVVWEGLWMSCVVQSTGQMQCKVYDSLLALPQDLQAAR) the chain is on the extracellular side. A helical transmembrane segment spans residues 82–102 (ALCVIALLLALLGLLVAITGA). Residues 103 to 116 (QCTTCVEDEGAKAR) lie on the Cytoplasmic side of the membrane. A helical membrane pass occupies residues 117 to 137 (IVLTAGVILLLAGILVLIPVC). Residues 138-159 (WTAHAIIQDFYNPLVAEALKRE) are Extracellular-facing. Residues 160-180 (LGASLYLGWAAAALLMLGGGL) traverse the membrane as a helical segment. Residues 181 to 217 (LCCTCPPPQVERPRGPRLGYSIPSRSGASGLDKRDYV) are Cytoplasmic-facing. A disordered region spans residues 194-217 (RGPRLGYSIPSRSGASGLDKRDYV).

This sequence belongs to the claudin family. Interacts with CLDN1, CD81 and OCLN. As to expression, expressed in the liver, in peripheral blood mononuclear cells and hepatocarcinoma cell lines.

It localises to the cell junction. It is found in the tight junction. The protein resides in the cell membrane. Plays a major role in tight junction-specific obliteration of the intercellular space, through calcium-independent cell-adhesion activity. Functionally, (Microbial infection) Acts as a receptor for hepatitis C virus (HCV) entry into hepatic cells. The sequence is that of Claudin-9 (CLDN9) from Homo sapiens (Human).